Here is a 353-residue protein sequence, read N- to C-terminus: Photosystem II protein D1 (353 aa).

Residue T2 is modified to N-acetylthreonine. The residue at position 2 (T2) is a Phosphothreonine. 3 helical membrane-spanning segments follow: residues 29 to 46, 118 to 133, and 142 to 156; these read YIGW…TATS, HFLL…EWEL, and WIAV…AATA. H118 provides a ligand contact to chlorophyll a. Y126 is a pheophytin a binding site. 2 residues coordinate [CaMn4O5] cluster: D170 and E189. A helical membrane pass occupies residues 197–218; it reads FHMLGVAGVFGGSLFSAMHGSL. Position 198 (H198) interacts with chlorophyll a. A quinone is bound by residues H215 and 264–265; that span reads SF. H215 provides a ligand contact to Fe cation. H272 provides a ligand contact to Fe cation. The helical transmembrane segment at 274–288 threads the bilayer; the sequence is FLAAWPVVGIWFTAL. [CaMn4O5] cluster contacts are provided by H332, E333, D342, and A344. The propeptide occupies 345–353; the sequence is AMEAPSVNG.

The protein belongs to the reaction center PufL/M/PsbA/D family. In terms of assembly, PSII is composed of 1 copy each of membrane proteins PsbA, PsbB, PsbC, PsbD, PsbE, PsbF, PsbH, PsbI, PsbJ, PsbK, PsbL, PsbM, PsbT, PsbX, PsbY, PsbZ, Psb30/Ycf12, at least 3 peripheral proteins of the oxygen-evolving complex and a large number of cofactors. It forms dimeric complexes. The D1/D2 heterodimer binds P680, chlorophylls that are the primary electron donor of PSII, and subsequent electron acceptors. It shares a non-heme iron and each subunit binds pheophytin, quinone, additional chlorophylls, carotenoids and lipids. D1 provides most of the ligands for the Mn4-Ca-O5 cluster of the oxygen-evolving complex (OEC). There is also a Cl(-1) ion associated with D1 and D2, which is required for oxygen evolution. The PSII complex binds additional chlorophylls, carotenoids and specific lipids. serves as cofactor. In terms of processing, tyr-161 forms a radical intermediate that is referred to as redox-active TyrZ, YZ or Y-Z. Post-translationally, C-terminally processed by CTPA; processing is essential to allow assembly of the oxygen-evolving complex and thus photosynthetic growth.

It is found in the plastid. It localises to the chloroplast thylakoid membrane. The enzyme catalyses 2 a plastoquinone + 4 hnu + 2 H2O = 2 a plastoquinol + O2. In terms of biological role, photosystem II (PSII) is a light-driven water:plastoquinone oxidoreductase that uses light energy to abstract electrons from H(2)O, generating O(2) and a proton gradient subsequently used for ATP formation. It consists of a core antenna complex that captures photons, and an electron transfer chain that converts photonic excitation into a charge separation. The D1/D2 (PsbA/PsbD) reaction center heterodimer binds P680, the primary electron donor of PSII as well as several subsequent electron acceptors. This is Photosystem II protein D1 from Phaseolus vulgaris (Kidney bean).